The chain runs to 497 residues: Glutamyl-tRNA(Gln) amidotransferase subunit A (497 aa).

Catalysis depends on charge relay system residues Lys85 and Ser160. Residue Ser184 is the Acyl-ester intermediate of the active site.

It belongs to the amidase family. GatA subfamily. In terms of assembly, heterotrimer of A, B and C subunits.

It carries out the reaction L-glutamyl-tRNA(Gln) + L-glutamine + ATP + H2O = L-glutaminyl-tRNA(Gln) + L-glutamate + ADP + phosphate + H(+). Allows the formation of correctly charged Gln-tRNA(Gln) through the transamidation of misacylated Glu-tRNA(Gln) in organisms which lack glutaminyl-tRNA synthetase. The reaction takes place in the presence of glutamine and ATP through an activated gamma-phospho-Glu-tRNA(Gln). The protein is Glutamyl-tRNA(Gln) amidotransferase subunit A (gatA) of Mycobacterium leprae (strain TN).